The chain runs to 197 residues: uncharacterized protein (197 aa).

An N-terminal signal peptide occupies residues 1-19 (MKLASLLVGSLMLAVPALA).

It is found in the secreted. This is an uncharacterized protein from Arthroderma benhamiae (strain ATCC MYA-4681 / CBS 112371) (Trichophyton mentagrophytes).